The sequence spans 87 residues: U1-theraphotoxin-Ct1a (87 aa).

The N-terminal stretch at 1 to 23 (MKTFTLIAILTCAVLVIFHAAAA) is a signal peptide. The propeptide occupies 24-48 (EELEVQDVIQPEDTLTGLATLDEDR).

The protein belongs to the neurotoxin 12 (Hwtx-2) family. 03 (juruin) subfamily. Post-translationally, contains 3 disulfide bonds. Two different connectivities are observed in similar proteins (C1-C3, C2-C5, C4-C6 or C1-C4, C2-C5, C3-C6). As to expression, expressed by the venom gland.

The protein resides in the secreted. Its function is as follows. This toxin causes paralysis and death to sheep blowflies. It may inhibit voltage-gated calcium channels. The polypeptide is U1-theraphotoxin-Ct1a (Coremiocnemis tropix (Australian tarantula spider)).